Consider the following 144-residue polypeptide: 3-dehydroquinate dehydratase (144 aa).

Tyr22 (proton acceptor) is an active-site residue. Substrate-binding residues include Asn73, His79, and Asp86. His99 serves as the catalytic Proton donor. Substrate is bound by residues 100-101 (LS) and Arg110.

It belongs to the type-II 3-dehydroquinase family. Homododecamer.

It catalyses the reaction 3-dehydroquinate = 3-dehydroshikimate + H2O. It participates in metabolic intermediate biosynthesis; chorismate biosynthesis; chorismate from D-erythrose 4-phosphate and phosphoenolpyruvate: step 3/7. Its function is as follows. Catalyzes a trans-dehydration via an enolate intermediate. This chain is 3-dehydroquinate dehydratase, found in Trichlorobacter lovleyi (strain ATCC BAA-1151 / DSM 17278 / SZ) (Geobacter lovleyi).